The sequence spans 210 residues: Large ribosomal subunit protein uL5 (210 aa).

The tract at residues 188 to 210 is disordered; it reads AKDDPKKAKTKRGPAYYAKKKKK. Positions 195–210 are enriched in basic residues; the sequence is AKTKRGPAYYAKKKKK.

It belongs to the universal ribosomal protein uL5 family. As to quaternary structure, part of the 50S ribosomal subunit; part of the 5S rRNA/L5/L18/L25 subcomplex. Contacts the 5S rRNA and the P site tRNA. Forms a bridge to the 30S subunit in the 70S ribosome.

Its function is as follows. This is one of the proteins that bind and probably mediate the attachment of the 5S RNA into the large ribosomal subunit, where it forms part of the central protuberance. In the 70S ribosome it contacts protein S13 of the 30S subunit (bridge B1b), connecting the 2 subunits; this bridge is implicated in subunit movement. Contacts the P site tRNA; the 5S rRNA and some of its associated proteins might help stabilize positioning of ribosome-bound tRNAs. The polypeptide is Large ribosomal subunit protein uL5 (Cutibacterium acnes (strain DSM 16379 / KPA171202) (Propionibacterium acnes)).